Consider the following 482-residue polypeptide: UDP-N-acetylmuramate--L-alanine ligase (482 aa).

An ATP-binding site is contributed by 123-129 (GTHGKTT).

Belongs to the MurCDEF family.

It localises to the cytoplasm. The catalysed reaction is UDP-N-acetyl-alpha-D-muramate + L-alanine + ATP = UDP-N-acetyl-alpha-D-muramoyl-L-alanine + ADP + phosphate + H(+). It participates in cell wall biogenesis; peptidoglycan biosynthesis. Its function is as follows. Cell wall formation. The polypeptide is UDP-N-acetylmuramate--L-alanine ligase (Pseudomonas putida (strain W619)).